The primary structure comprises 471 residues: BRISC complex subunit FAM175B (471 aa).

The region spanning 7-161 (LVTISGAALS…THKFRHVFLR (155 aa)) is the MPN domain. Residues 245–272 (ESDLEVAELEKQVHELKIKIATQQLAKR) adopt a coiled-coil conformation. A disordered region spans residues 343–445 (AEKSRRAGRS…FSDAECPISS (103 aa)). Residues 359-370 (NQQQETQNFFTN) show a composition bias toward low complexity.

The protein belongs to the FAM175 family. Abro1 subfamily. As to quaternary structure, component of the BRISC complex, at least composed of FAM175B/ABRO1, BRCC3/BRCC36, BABAM2 and BABAM1/NBA1. Within the complex, interacts directly with BRCC3/BRCC36. The heterodimer with BRCC3/BRCC36 assembles into a heterotetramer. The BRISC complex binds polyubiquitin.

The protein resides in the cytoplasm. The protein localises to the nucleus. It is found in the cytoskeleton. It localises to the spindle pole. In terms of biological role, component of the BRISC complex that specifically cleaves 'Lys-63'-linked polyubiquitin, leaving the last ubiquitin chain attached to its substrates. Does not have activity by itself, but the catalytic subunit BRCC3/BRCC36 needs to be associated into a heterotetramer with FAM175B for minimal in vitro activity. May act as a central scaffold protein that assembles the various components of the BRISC complex and retains them in the cytoplasm. Plays a role in regulating the onset of apoptosis via its role in modulating 'Lys-63'-linked ubiquitination of target proteins. Required for normal mitotic spindle assembly and microtubule attachment to kinetochores via its role in deubiquitinating numa1. This Camponotus floridanus (Florida carpenter ant) protein is BRISC complex subunit FAM175B.